Consider the following 283-residue polypeptide: Pyridoxine/pyridoxal/pyridoxamine kinase (283 aa).

Substrate is bound by residues Ser23 and His59. Asp125 provides a ligand contact to ATP. Position 136 (Tyr136) interacts with Mg(2+). ATP-binding positions include Thr157, Glu162, Thr195, 222 to 225, and Thr232; that span reads HAHV. Glu162 contacts Mg(2+). Residue Asp234 coordinates substrate.

It belongs to the pyridoxine kinase family. PdxK subfamily. As to quaternary structure, homodimer. The cofactor is Mg(2+).

The enzyme catalyses pyridoxal + ATP = pyridoxal 5'-phosphate + ADP + H(+). It catalyses the reaction pyridoxine + ATP = pyridoxine 5'-phosphate + ADP + H(+). The catalysed reaction is pyridoxamine + ATP = pyridoxamine 5'-phosphate + ADP + H(+). The protein operates within cofactor metabolism; pyridoxal 5'-phosphate salvage; pyridoxal 5'-phosphate from pyridoxal: step 1/1. It participates in cofactor metabolism; pyridoxal 5'-phosphate salvage; pyridoxine 5'-phosphate from pyridoxine: step 1/1. Its pathway is cofactor metabolism; pyridoxal 5'-phosphate salvage; pyridoxamine 5'-phosphate from pyridoxamine: step 1/1. Its function is as follows. B6-vitamer kinase involved in the salvage pathway of pyridoxal 5'-phosphate (PLP). Catalyzes the phosphorylation of pyridoxine (PN), pyridoxal (PL), and pyridoxamine (PM), forming their respective 5'-phosphorylated esters, i.e. PNP, PLP and PMP. The protein is Pyridoxine/pyridoxal/pyridoxamine kinase of Bordetella bronchiseptica (strain ATCC BAA-588 / NCTC 13252 / RB50) (Alcaligenes bronchisepticus).